A 205-amino-acid chain; its full sequence is Protein Rcp (205 aa).

It belongs to the NAD(P)-dependent epimerase/dehydratase family.

The protein is Protein Rcp (rcp) of Vibrio cholerae serotype O1 (strain ATCC 39315 / El Tor Inaba N16961).